The chain runs to 370 residues: Dihydroorotate dehydrogenase (quinone) (370 aa).

Residues 80-84 and Thr-104 each bind FMN; that span reads AGFDK. Lys-84 provides a ligand contact to substrate. Residue 129–133 coordinates substrate; that stretch reads NRMGF. Residues Asn-157 and Asn-190 each contribute to the FMN site. Asn-190 contributes to the substrate binding site. Catalysis depends on Ser-193, which acts as the Nucleophile. Asn-195 serves as a coordination point for substrate. Lys-226 and Thr-254 together coordinate FMN. 255 to 256 contacts substrate; it reads NT. FMN is bound by residues Gly-278, Gly-307, and 328–329; that span reads YT.

This sequence belongs to the dihydroorotate dehydrogenase family. Type 2 subfamily. Monomer. FMN serves as cofactor.

It is found in the cell membrane. It carries out the reaction (S)-dihydroorotate + a quinone = orotate + a quinol. It functions in the pathway pyrimidine metabolism; UMP biosynthesis via de novo pathway; orotate from (S)-dihydroorotate (quinone route): step 1/1. Catalyzes the conversion of dihydroorotate to orotate with quinone as electron acceptor. In Mycolicibacterium paratuberculosis (strain ATCC BAA-968 / K-10) (Mycobacterium paratuberculosis), this protein is Dihydroorotate dehydrogenase (quinone).